The primary structure comprises 354 residues: Heat-inducible transcription repressor HrcA (354 aa).

This sequence belongs to the HrcA family.

Its function is as follows. Negative regulator of class I heat shock genes (grpE-dnaK-dnaJ and groELS operons). Prevents heat-shock induction of these operons. This chain is Heat-inducible transcription repressor HrcA, found in Herpetosiphon aurantiacus (strain ATCC 23779 / DSM 785 / 114-95).